Consider the following 456-residue polypeptide: F-box/FBD/LRR-repeat protein At3g52680 (456 aa).

The region spanning 20–73 (KDRISELPDGLLLKILSSLPTNIVVATSVLSKQWRSLWKLVPNLEFDSDDYESE) is the F-box domain. LRR repeat units follow at residues 74–100 (HYTF…RLKF), 102–127 (NFNP…VLDF), 152–179 (TLKL…HLEF), 180–205 (VRYK…RLYR), 225–252 (TIHD…LIEE), 270–295 (IAEV…LLNL), and 318–344 (TREA…KLTD). Residues 358–409 (KWNEPKDVPECLLSQLETFVWRRFDWGREEEKEIATYILKNGRRLKKATFST) enclose the FBD domain.

This chain is F-box/FBD/LRR-repeat protein At3g52680, found in Arabidopsis thaliana (Mouse-ear cress).